Reading from the N-terminus, the 424-residue chain is MFS-type transporter opdF (424 aa).

Residues 1 to 10 (MSDTSLEKGN) show a composition bias toward basic and acidic residues. The tract at residues 1–23 (MSDTSLEKGNEGPTAEAPKVAPP) is disordered. Transmembrane regions (helical) follow at residues 36-56 (VAGASVALFVSFGWVNCIALF), 102-122 (VPIAIGSFLHVFGLMMASLST), 127-147 (LMLSQSVVSGIGSSLIFTPAM), 160-180 (IVGGLTVAGSSLGGVVFPLMV), and 187-207 (VGFGWTMRICAFMILGLLVFA). Asparagine 208 carries N-linked (GlcNAc...) asparagine glycosylation. 6 helical membrane passes run 239–259 (LCVASFFMYWGIFIPFDYIVV), 265–285 (GMSTQMAWSLVPILNGASFFG), 299–319 (FNVMIVMTTLSAILVLALWLP), 329–349 (FAALFGITSGAIIGLGPVLIV), 364–384 (VLAFAAVGTLTSPPIGGAIAA), and 391–411 (TYTCVFSGVSFLIGTLGLAAL).

Belongs to the major facilitator superfamily. Monocarboxylate porter (TC 2.A.1.13) family.

The protein localises to the membrane. In terms of biological role, MFS-type transporter; part of the gene cluster that mediates the biosynthesis of oxopyrrolidines, polyketide-amino acid hybrid compounds with feature structures of tetramic acid. This chain is MFS-type transporter opdF, found in Penicillium oxalicum (strain 114-2 / CGMCC 5302) (Penicillium decumbens).